We begin with the raw amino-acid sequence, 182 residues long: Dihydrofolate reductase (182 aa).

The DHFR domain occupies Arg3 to Lys180. NADP(+) is bound by residues Ala9 and Gly15–Asp21. Glu29 to Ser34 is a binding site for substrate. Arg53 to Thr55 serves as a coordination point for NADP(+). Substrate is bound at residue Arg69. Residues Ser75–Thr77 and Gly113–Glu120 contribute to the NADP(+) site.

This sequence belongs to the dihydrofolate reductase family. Monomer. Interacts with vg.

It catalyses the reaction (6S)-5,6,7,8-tetrahydrofolate + NADP(+) = 7,8-dihydrofolate + NADPH + H(+). It participates in cofactor biosynthesis; tetrahydrofolate biosynthesis; 5,6,7,8-tetrahydrofolate from 7,8-dihydrofolate: step 1/1. Functionally, by interacting with vestigial (vg), may control genes involved in DNA replication. Key enzyme in folate metabolism. Catalyzes an essential reaction for de novo glycine and purine synthesis, and for DNA precursor synthesis. The polypeptide is Dihydrofolate reductase (Dhfr) (Drosophila melanogaster (Fruit fly)).